The following is a 154-amino-acid chain: Ferredoxin C 1, chloroplastic (154 aa).

Residues 1–56 (MATLPLPTQTSTISLPKPYLSNSFSFPLRNATLSTTTNRRNFLTTGRIIARAYKVV) constitute a chloroplast transit peptide. Positions 57–142 (VEHDGKTTEL…DCHIKMIPEE (86 aa)) constitute a 2Fe-2S ferredoxin-type domain. 4 residues coordinate [2Fe-2S] cluster: cysteine 89, cysteine 94, cysteine 97, and cysteine 126.

Belongs to the 2Fe2S plant-type ferredoxin family. It depends on [2Fe-2S] cluster as a cofactor.

The protein resides in the plastid. Its subcellular location is the chloroplast. Ferredoxins are iron-sulfur proteins that transfer electrons in a wide variety of metabolic reactions. Mediates alternative electron partitioning in conditions of acceptor limitation at photosystem I. Accepts electrons from photosystem I (PSI) and is capable of electron transfer with FNR, but cannot support photoreduction of NADP(+). This chain is Ferredoxin C 1, chloroplastic, found in Arabidopsis thaliana (Mouse-ear cress).